Consider the following 140-residue polypeptide: Low calcium response locus protein T (140 aa).

This is Low calcium response locus protein T (lcrT) from Yersinia pseudotuberculosis serotype I (strain IP32953).